We begin with the raw amino-acid sequence, 399 residues long: Cytochrome P450 FAS1 (399 aa).

C349 is a binding site for heme.

It belongs to the cytochrome P450 family. Heme is required as a cofactor.

It localises to the cytoplasm. May be involved in the biosynthesis of cytokinin phytohormones and in host plant fasciation (leafy gall). The polypeptide is Cytochrome P450 FAS1 (fas1) (Rhodococcoides fascians (Rhodococcus fascians)).